The sequence spans 464 residues: Protein FAM90A14 (464 aa).

Disordered regions lie at residues 1–42, 70–389, and 411–437; these read MMAR…DPRL, PATL…HDGA, and APSFHSPEKPGAFLAQSPHVSEKSEAP. Composition is skewed to basic and acidic residues over residues 74–89 and 97–114; these read GKKEGKENLKPWKPRV and NKDKGEKEERPRQQDPQR. The span at 180 to 197 shows a compositional bias: low complexity; it reads LASLSPLRKASLSSSSSL.

Belongs to the FAM90 family.

In Homo sapiens (Human), this protein is Protein FAM90A14.